The primary structure comprises 100 residues: Small ribosomal subunit protein uS14c (100 aa).

Belongs to the universal ribosomal protein uS14 family. Part of the 30S ribosomal subunit.

Its subcellular location is the plastid. The protein localises to the chloroplast. Its function is as follows. Binds 16S rRNA, required for the assembly of 30S particles. This chain is Small ribosomal subunit protein uS14c, found in Capsella bursa-pastoris (Shepherd's purse).